The following is a 347-amino-acid chain: Phosphoribosylformylglycinamidine cyclo-ligase (347 aa).

The protein belongs to the AIR synthase family.

The protein resides in the cytoplasm. The catalysed reaction is 2-formamido-N(1)-(5-O-phospho-beta-D-ribosyl)acetamidine + ATP = 5-amino-1-(5-phospho-beta-D-ribosyl)imidazole + ADP + phosphate + H(+). The protein operates within purine metabolism; IMP biosynthesis via de novo pathway; 5-amino-1-(5-phospho-D-ribosyl)imidazole from N(2)-formyl-N(1)-(5-phospho-D-ribosyl)glycinamide: step 2/2. This is Phosphoribosylformylglycinamidine cyclo-ligase from Alcanivorax borkumensis (strain ATCC 700651 / DSM 11573 / NCIMB 13689 / SK2).